A 94-amino-acid polypeptide reads, in one-letter code: Small ribosomal subunit protein uS19 (94 aa).

Belongs to the universal ribosomal protein uS19 family.

Its function is as follows. Protein S19 forms a complex with S13 that binds strongly to the 16S ribosomal RNA. The chain is Small ribosomal subunit protein uS19 from Natranaerobius thermophilus (strain ATCC BAA-1301 / DSM 18059 / JW/NM-WN-LF).